A 378-amino-acid chain; its full sequence is Erythronate-4-phosphate dehydrogenase (378 aa).

Substrate is bound by residues S45 and T66. Residues D146 and T175 each coordinate NAD(+). R208 is a catalytic residue. D232 serves as a coordination point for NAD(+). E237 is an active-site residue. The Proton donor role is filled by H254. G257 lines the NAD(+) pocket. Residue Y258 participates in substrate binding.

It belongs to the D-isomer specific 2-hydroxyacid dehydrogenase family. PdxB subfamily. In terms of assembly, homodimer.

It is found in the cytoplasm. The catalysed reaction is 4-phospho-D-erythronate + NAD(+) = (R)-3-hydroxy-2-oxo-4-phosphooxybutanoate + NADH + H(+). Its pathway is cofactor biosynthesis; pyridoxine 5'-phosphate biosynthesis; pyridoxine 5'-phosphate from D-erythrose 4-phosphate: step 2/5. In terms of biological role, catalyzes the oxidation of erythronate-4-phosphate to 3-hydroxy-2-oxo-4-phosphonooxybutanoate. This is Erythronate-4-phosphate dehydrogenase from Pectobacterium atrosepticum (strain SCRI 1043 / ATCC BAA-672) (Erwinia carotovora subsp. atroseptica).